Consider the following 319-residue polypeptide: Aspartate carbamoyltransferase catalytic subunit (319 aa).

Positions 57 and 58 each coordinate carbamoyl phosphate. Lysine 85 provides a ligand contact to L-aspartate. Residues arginine 107, histidine 140, and glutamine 143 each coordinate carbamoyl phosphate. Residues arginine 173 and arginine 227 each coordinate L-aspartate. The carbamoyl phosphate site is built by glycine 268 and proline 269.

This sequence belongs to the aspartate/ornithine carbamoyltransferase superfamily. ATCase family. As to quaternary structure, heterododecamer (2C3:3R2) of six catalytic PyrB chains organized as two trimers (C3), and six regulatory PyrI chains organized as three dimers (R2).

The catalysed reaction is carbamoyl phosphate + L-aspartate = N-carbamoyl-L-aspartate + phosphate + H(+). The protein operates within pyrimidine metabolism; UMP biosynthesis via de novo pathway; (S)-dihydroorotate from bicarbonate: step 2/3. Catalyzes the condensation of carbamoyl phosphate and aspartate to form carbamoyl aspartate and inorganic phosphate, the committed step in the de novo pyrimidine nucleotide biosynthesis pathway. The polypeptide is Aspartate carbamoyltransferase catalytic subunit (Mycobacterium tuberculosis (strain ATCC 25177 / H37Ra)).